The primary structure comprises 469 residues: Putative F-box/LRR-repeat protein At5g02930 (469 aa).

An F-box domain is found at 27–77 (VDSISDLPDAVLQHIFSYIPTELAIRTSVLSKRWRHVWSETPHLSFEWLKV). LRR repeat units follow at residues 30–58 (ISDL…VLSK), 178–203 (DCTM…SLKF), 204–214 (CMSLKYLNLSK), 223–250 (IERI…RLRD), 296–321 (TMLK…SLSK), and 341–366 (IIRS…TVYT).

This chain is Putative F-box/LRR-repeat protein At5g02930, found in Arabidopsis thaliana (Mouse-ear cress).